The primary structure comprises 478 residues: Putative UDP-glucose flavonoid 3-O-glucosyltransferase 3 (478 aa).

It belongs to the UDP-glycosyltransferase family.

The polypeptide is Putative UDP-glucose flavonoid 3-O-glucosyltransferase 3 (Fragaria ananassa (Strawberry)).